A 203-amino-acid chain; its full sequence is Probable proteasome subunit beta type-4 (203 aa).

It belongs to the peptidase T1B family. The 26S proteasome consists of a 20S proteasome core and two 19S regulatory subunits. The 20S proteasome core is composed of 28 subunits that are arranged in four stacked rings, resulting in a barrel-shaped structure. The two end rings are each formed by seven alpha subunits, and the two central rings are each formed by seven beta subunits. The catalytic chamber with the active sites is on the inside of the barrel.

It localises to the cytoplasm. The protein resides in the nucleus. In terms of biological role, non-catalytic component of the proteasome, a multicatalytic proteinase complex which is characterized by its ability to cleave peptides with Arg, Phe, Tyr, Leu, and Glu adjacent to the leaving group at neutral or slightly basic pH. The proteasome has an ATP-dependent proteolytic activity. The chain is Probable proteasome subunit beta type-4 (pcb-4) from Neurospora crassa (strain ATCC 24698 / 74-OR23-1A / CBS 708.71 / DSM 1257 / FGSC 987).